A 257-amino-acid polypeptide reads, in one-letter code: Pimeloyl-[acyl-carrier protein] methyl ester esterase (257 aa).

Positions H15–H241 constitute an AB hydrolase-1 domain. Residues W22, S82–L83, and F143–Q147 contribute to the substrate site. S82 (nucleophile) is an active-site residue. Active-site residues include D207 and H235. H235 is a substrate binding site.

The protein belongs to the AB hydrolase superfamily. Carboxylesterase BioH family. In terms of assembly, monomer.

The protein resides in the cytoplasm. It catalyses the reaction 6-carboxyhexanoyl-[ACP] methyl ester + H2O = 6-carboxyhexanoyl-[ACP] + methanol + H(+). It functions in the pathway cofactor biosynthesis; biotin biosynthesis. The physiological role of BioH is to remove the methyl group introduced by BioC when the pimeloyl moiety is complete. It allows to synthesize pimeloyl-ACP via the fatty acid synthetic pathway through the hydrolysis of the ester bonds of pimeloyl-ACP esters. This chain is Pimeloyl-[acyl-carrier protein] methyl ester esterase, found in Klebsiella pneumoniae subsp. pneumoniae (strain ATCC 700721 / MGH 78578).